A 141-amino-acid chain; its full sequence is Heavy metal-associated isoprenylated plant protein 29 (141 aa).

One can recognise an HMA domain in the interval 1–59; that stretch reads MEVPMDCPGCENKVRKALEKMNGVHDVQIDIKQQRVTVTGSAEQKKVLKVARNVTKRDI. A metal cation is bound by residues Cys-7 and Cys-10. Cys-138 is subject to Cysteine methyl ester. The S-farnesyl cysteine moiety is linked to residue Cys-138. The propeptide at 139-141 is removed in mature form; that stretch reads SIM.

The protein belongs to the HIPP family.

Heavy-metal-binding protein. The chain is Heavy metal-associated isoprenylated plant protein 29 from Arabidopsis thaliana (Mouse-ear cress).